The following is a 516-amino-acid chain: Signal recognition particle protein (516 aa).

Residues 108–115 (GLQGAGKT), 191–195 (DTAGR), and 249–252 (TKID) contribute to the GTP site. The segment at 383–405 (MTPEERENPDLLTPSRRRRIASG) is disordered.

It belongs to the GTP-binding SRP family. SRP54 subfamily. As to quaternary structure, part of the signal recognition particle protein translocation system, which is composed of SRP and FtsY.

It is found in the cytoplasm. It catalyses the reaction GTP + H2O = GDP + phosphate + H(+). In terms of biological role, involved in targeting and insertion of nascent membrane proteins into the cytoplasmic membrane. Binds to the hydrophobic signal sequence of the ribosome-nascent chain (RNC) as it emerges from the ribosomes. The SRP-RNC complex is then targeted to the cytoplasmic membrane where it interacts with the SRP receptor FtsY. This chain is Signal recognition particle protein, found in Streptococcus mutans serotype c (strain ATCC 700610 / UA159).